Here is a 321-residue protein sequence, read N- to C-terminus: Lipoyl synthase (321 aa).

Cys68, Cys73, Cys79, Cys94, Cys98, Cys101, and Ser308 together coordinate [4Fe-4S] cluster. The 218-residue stretch at 80 to 297 (FNHGTATFMI…KEIALELGFT (218 aa)) folds into the Radical SAM core domain.

This sequence belongs to the radical SAM superfamily. Lipoyl synthase family. [4Fe-4S] cluster is required as a cofactor.

It is found in the cytoplasm. It catalyses the reaction [[Fe-S] cluster scaffold protein carrying a second [4Fe-4S](2+) cluster] + N(6)-octanoyl-L-lysyl-[protein] + 2 oxidized [2Fe-2S]-[ferredoxin] + 2 S-adenosyl-L-methionine + 4 H(+) = [[Fe-S] cluster scaffold protein] + N(6)-[(R)-dihydrolipoyl]-L-lysyl-[protein] + 4 Fe(3+) + 2 hydrogen sulfide + 2 5'-deoxyadenosine + 2 L-methionine + 2 reduced [2Fe-2S]-[ferredoxin]. It participates in protein modification; protein lipoylation via endogenous pathway; protein N(6)-(lipoyl)lysine from octanoyl-[acyl-carrier-protein]: step 2/2. Catalyzes the radical-mediated insertion of two sulfur atoms into the C-6 and C-8 positions of the octanoyl moiety bound to the lipoyl domains of lipoate-dependent enzymes, thereby converting the octanoylated domains into lipoylated derivatives. This Vibrio atlanticus (strain LGP32) (Vibrio splendidus (strain Mel32)) protein is Lipoyl synthase.